Here is a 127-residue protein sequence, read N- to C-terminus: Small ribosomal subunit protein uS11 (127 aa).

This sequence belongs to the universal ribosomal protein uS11 family. As to quaternary structure, part of the 30S ribosomal subunit.

Located on the platform of the 30S subunit. The chain is Small ribosomal subunit protein uS11 from Halobacterium salinarum (strain ATCC 700922 / JCM 11081 / NRC-1) (Halobacterium halobium).